The chain runs to 1171 residues: Phytochrome B (1171 aa).

The span at 1–19 (MASGSRATPTRSPSSARPA) shows a compositional bias: low complexity. The disordered stretch occupies residues 1 to 53 (MASGSRATPTRSPSSARPAAPRHQHHHSQSSGGSTSRAGGGGGGGGGGGGGAA). Residues 38-52 (AGGGGGGGGGGGGGA) are compositionally biased toward gly residues. In terms of domain architecture, GAF spans 259-442 (DVKLLCDTVV…AFGLQLNMEL (184 aa)). Phytochromobilin is bound at residue C364. 2 PAS domains span residues 661 to 732 (VARE…LRGD) and 795 to 866 (DYKA…MIVL). The Histidine kinase domain occupies 943 to 1161 (YIYQEIKNPL…FFHIVLELPQ (219 aa)).

Belongs to the phytochrome family. Homodimer. Contains one covalently linked phytochromobilin chromophore.

Functionally, regulatory photoreceptor which exists in two forms that are reversibly interconvertible by light: the Pr form that absorbs maximally in the red region of the spectrum and the Pfr form that absorbs maximally in the far-red region. Photoconversion of Pr to Pfr induces an array of morphogenic responses, whereas reconversion of Pfr to Pr cancels the induction of those responses. Pfr controls the expression of a number of nuclear genes including those encoding the small subunit of ribulose-bisphosphate carboxylase, chlorophyll A/B binding protein, protochlorophyllide reductase, rRNA, etc. It also controls the expression of its own gene(s) in a negative feedback fashion. The sequence is that of Phytochrome B (PHYB) from Oryza sativa subsp. indica (Rice).